We begin with the raw amino-acid sequence, 316 residues long: Pantothenate kinase (316 aa).

Residue 95 to 102 (GSVAVGKS) coordinates ATP.

It belongs to the prokaryotic pantothenate kinase family.

It localises to the cytoplasm. The catalysed reaction is (R)-pantothenate + ATP = (R)-4'-phosphopantothenate + ADP + H(+). The protein operates within cofactor biosynthesis; coenzyme A biosynthesis; CoA from (R)-pantothenate: step 1/5. The protein is Pantothenate kinase of Hamiltonella defensa subsp. Acyrthosiphon pisum (strain 5AT).